The sequence spans 530 residues: DEK domain-containing chromatin-associated protein 2 (530 aa).

Basic and acidic residues-rich tracts occupy residues 1–47 (MATE…AEEE) and 57–68 (AKEGELGEKDKE). Residues 1-130 (MATETLDEKT…PSKSVSIEKG (130 aa)) are disordered. A coiled-coil region spans residues 41 to 61 (IGEAEEEKKEDEEEGEAKEGE). Positions 69–82 (DDVESEEEEEEEEG) are enriched in acidic residues. Composition is skewed to basic and acidic residues over residues 83–93 (SGSKKSSEKET) and 100–110 (RPTRERKKVER). Residues 185-205 (EKEEEKQRARIKEKIDKCVKE) adopt a coiled-coil conformation. The tract at residues 246–430 (IIADQEKAKK…GKAKAEPTRK (185 aa)) is disordered. The segment covering 253-263 (AKKRKSTPKRG) has biased composition (basic residues). The Nuclear localization signal 1 motif lies at 260 to 267 (PKRGKSGE). A compositionally biased stretch (acidic residues) spans 286–332 (SDTEEGKDEGDADSEGTNDPHEEDDAAPEEESDHEKTDTDDEKDEVE). 2 consecutive short sequence motifs (nuclear localization signal) follow at residues 343–350 (SKKTVEES) and 384–391 (AKKQKVDH). A compositionally biased stretch (polar residues) spans 374–384 (KQIAKSTSSPA). Residues 387-397 (QKVDHVESSKE) are compositionally biased toward basic and acidic residues. The region spanning 426 to 481 (EPTRKEMLEVVSKILKEVDFNTATLSDILQKLSDHFGVELSHRKPEVKDVITEAIN) is the DEK-C domain. DNA-binding regions lie at residues 444–458 (DFNTATLSDILQKLS) and 473–477 (KDVIT). Positions 482-530 (AMTDDEEEDEEEEAEAGSDKEKEEVKGEEEEEKAEAESDKEKEKEEPKD) are disordered. Acidic residues predominate over residues 484 to 497 (TDDEEEDEEEEAEA). Residues 492–527 (EEEAEAGSDKEKEEVKGEEEEEKAEAESDKEKEKEE) adopt a coiled-coil conformation. Positions 516–530 (EAESDKEKEKEEPKD) are enriched in basic and acidic residues.

As to quaternary structure, found in a mRNA splicing-dependent exon junction complex (EJC). Binds specifically histones H3 and H4.

The protein resides in the nucleus. It is found in the nucleolus. Chromatin-associated protein which contributes to the modulation of chromatin structure (such as super-helical structure of DNA) and function. Binds to chromatin of protein-coding genes throughout the genome to regulate nucleosome occupancy and chromatin accessibility, and to modulate the expression of target genes. This is DEK domain-containing chromatin-associated protein 2 from Arabidopsis thaliana (Mouse-ear cress).